The following is a 417-amino-acid chain: Phosphoglycerate kinase 1 (417 aa).

Ser2 is subject to N-acetylserine. 2 positions are modified to phosphoserine: Ser2 and Ser4. Residue Lys6 is modified to N6-succinyllysine. At Lys11 the chain carries N6-acetyllysine. Residues Val23, Asp24, Phe25, Asn26, Gln38, and Arg39 each contribute to the (2R)-3-phosphoglycerate site. Residues 38 to 43 (QRIKAA) are mitochondrial targeting region exposed following cis-trans isomerization by PIN1 and recognized by the TOM complex for mitochondrial translocation of the protein. The residue at position 48 (Lys48) is an N6-acetyllysine; alternate. An N6-succinyllysine; alternate modification is found at Lys48. Ser62, His63, Gly65, and Arg66 together coordinate (2R)-3-phosphoglycerate. Residue Lys75 is modified to N6-acetyllysine. Residue Tyr76 is modified to Phosphotyrosine. An N6-acetyllysine mark is found at Lys86 and Lys91. Lys97 bears the N6-acetyllysine; alternate mark. Lys97 carries the post-translational modification N6-(2-hydroxyisobutyryl)lysine; alternate. Residues Leu122 and Arg123 each contribute to the (2R)-3-phosphoglycerate site. An N6-acetyllysine; alternate modification is found at Lys131. N6-malonyllysine; alternate is present on Lys131. Lys146 carries the post-translational modification N6-acetyllysine. (2R)-3-phosphoglycerate contacts are provided by His170 and Arg171. Lys191 carries the post-translational modification N6-succinyllysine. The residue at position 196 (Tyr196) is a Phosphotyrosine. Position 199 is an N6-acetyllysine (Lys199). At Ser203 the chain carries Phosphoserine; by MAPK1. Gly214 contacts ADP. CDP is bound at residue Gly214. AMP contacts are provided by Ala215 and Lys216. Residue Ala215 coordinates ATP. Position 215 (Ala215) interacts with Mg(2+). Lys216 carries the post-translational modification N6-(2-hydroxyisobutyryl)lysine. 2 residues coordinate Mg(2+): Ala218 and Asp219. Residue Asp219 participates in CDP binding. Residue Lys220 coordinates AMP. Lys220 provides a ligand contact to ATP. Lys220 is modified (N6-(2-hydroxyisobutyryl)lysine). Gly238 contacts ADP. Gly238 provides a ligand contact to CDP. Gly239 serves as a coordination point for AMP. ATP is bound at residue Gly239. Lys267 and Lys291 each carry N6-acetyllysine. Residue Gly313 participates in AMP binding. Gly313 contributes to the ATP binding site. Lys323 carries the post-translational modification N6-(2-hydroxyisobutyryl)lysine. CDP contacts are provided by Gly338, Val340, and Phe343. Phe343 lines the ADP pocket. Glu344 contacts AMP. Glu344 is an ATP binding site. Lys361 bears the N6-acetyllysine mark. ATP contacts are provided by Asp375 and Thr376. Asp375 provides a ligand contact to Mg(2+).

It belongs to the phosphoglycerate kinase family. As to quaternary structure, monomer. Interacts with kinase MAPK1/ERK2; the interaction is direct, occurs under hypoxic conditions, and promotes its interaction with PIN1. Interacts with peptidyl-prolyl cis-trans isomerase PIN1; the interaction is direct, occurs under hypoxic conditions, and targets the protein to the mitochondrion by promoting interactions with the TOM complex. Interacts with mitochondrial circRNA mcPGK1 (via its 2nd stem-loop); the interaction is direct and targets the protein to the mitochondrion by promoting interactions with the TOM complex. Interacts with pyruvate dehydrogenase kinase PDK1; the interaction is direct, occurs under hypoxic conditions and leads to PDK1-mediated inhibition of pyruvate dehydrogenase complex activity. Mg(2+) serves as cofactor. Phosphorylated at Ser-203 by MAPK1/ERK2 under hypoxic conditions, which promotes its mitochondrial targeting. Mainly expressed in spermatogonia. Localized on the principle piece in the sperm (at protein level). Expression significantly decreased in the testis of elderly men.

The protein localises to the cytoplasm. Its subcellular location is the cytosol. The protein resides in the mitochondrion matrix. The catalysed reaction is (2R)-3-phosphoglycerate + ATP = (2R)-3-phospho-glyceroyl phosphate + ADP. It carries out the reaction L-seryl-[protein] + ATP = O-phospho-L-seryl-[protein] + ADP + H(+). It participates in carbohydrate degradation; glycolysis; pyruvate from D-glyceraldehyde 3-phosphate: step 2/5. Its activity is regulated as follows. Specifically inhibited by heterocyclic compound CBR-470-0. In terms of biological role, catalyzes one of the two ATP producing reactions in the glycolytic pathway via the reversible conversion of 1,3-diphosphoglycerate to 3-phosphoglycerate. Both L- and D- forms of purine and pyrimidine nucleotides can be used as substrates, but the activity is much lower on pyrimidines. In addition to its role as a glycolytic enzyme, it seems that PGK1 acts as a polymerase alpha cofactor protein (primer recognition protein). Acts as a protein kinase when localized to the mitochondrion where it phosphorylates pyruvate dehydrogenase kinase PDK1 to inhibit pyruvate dehydrogenase complex activity and suppress the formation of acetyl-coenzyme A from pyruvate, and consequently inhibit oxidative phosphorylation and promote glycolysis. May play a role in sperm motility. This Homo sapiens (Human) protein is Phosphoglycerate kinase 1 (PGK1).